A 214-amino-acid polypeptide reads, in one-letter code: MASYKNNNLVRLCIMGDGGVGKTAVTIQFISNHFVYYYDPTIEDSYRKQCVIDDQVYMLDILDTAGQDELTAMRDQWIRSCEGFVLVYSITSRSSFDQVQFFREQIIRVLDRDDVPIMMIGNKSDLDDERQVTYQEGKDLARCLGMSFMEVSAKSRANIEEVFNETVRSVKRREESLLKKDKSKDGKDIKKKNSIIKKLNQKVNNTKTSICKMM.

16 to 23 provides a ligand contact to GTP; sequence GDGGVGKT. The Effector region signature appears at 38-46; that stretch reads YDPTIEDSY. GTP contacts are provided by residues 63 to 67 and 122 to 125; these read DTAGQ and NKSD. At Cys211 the chain carries Cysteine methyl ester. Cys211 carries the S-geranylgeranyl cysteine lipid modification. A propeptide spans 212–214 (removed in mature form); it reads KMM.

The protein belongs to the small GTPase superfamily. Ras family.

The protein localises to the cell membrane. The enzyme catalyses GTP + H2O = GDP + phosphate + H(+). Functionally, ras proteins bind GDP/GTP and possess intrinsic GTPase activity. This chain is Ras-like protein rasZ (rasZ), found in Dictyostelium discoideum (Social amoeba).